We begin with the raw amino-acid sequence, 246 residues long: Probable transcriptional regulatory protein Ent638_2432 (246 aa).

The protein belongs to the TACO1 family.

It localises to the cytoplasm. The protein is Probable transcriptional regulatory protein Ent638_2432 of Enterobacter sp. (strain 638).